A 283-amino-acid chain; its full sequence is uncharacterized protein (283 aa).

Residues 1 to 25 (MNKKRLLFRTPLDALFLLFGTALSA) form the signal peptide. C26 carries the N-palmitoyl cysteine lipid modification. C26 carries S-diacylglycerol cysteine lipidation.

It belongs to the MG439/MG440 family.

Its subcellular location is the cell membrane. This is an uncharacterized protein from Mycoplasma pneumoniae (strain ATCC 29342 / M129 / Subtype 1) (Mycoplasmoides pneumoniae).